The primary structure comprises 249 residues: Probable transcriptional regulatory protein Wbm0670 (249 aa).

Belongs to the TACO1 family.

The protein localises to the cytoplasm. This chain is Probable transcriptional regulatory protein Wbm0670, found in Wolbachia sp. subsp. Brugia malayi (strain TRS).